Here is a 524-residue protein sequence, read N- to C-terminus: Bifunctional purine biosynthesis protein PurH (524 aa).

Positions Met1 to Cys154 constitute an MGS-like domain.

It belongs to the PurH family.

It carries out the reaction (6R)-10-formyltetrahydrofolate + 5-amino-1-(5-phospho-beta-D-ribosyl)imidazole-4-carboxamide = 5-formamido-1-(5-phospho-D-ribosyl)imidazole-4-carboxamide + (6S)-5,6,7,8-tetrahydrofolate. The enzyme catalyses IMP + H2O = 5-formamido-1-(5-phospho-D-ribosyl)imidazole-4-carboxamide. It functions in the pathway purine metabolism; IMP biosynthesis via de novo pathway; 5-formamido-1-(5-phospho-D-ribosyl)imidazole-4-carboxamide from 5-amino-1-(5-phospho-D-ribosyl)imidazole-4-carboxamide (10-formyl THF route): step 1/1. It participates in purine metabolism; IMP biosynthesis via de novo pathway; IMP from 5-formamido-1-(5-phospho-D-ribosyl)imidazole-4-carboxamide: step 1/1. This Acaryochloris marina (strain MBIC 11017) protein is Bifunctional purine biosynthesis protein PurH.